The chain runs to 304 residues: Oxygen-dependent coproporphyrinogen-III oxidase (304 aa).

Ser94 serves as a coordination point for substrate. His98 and His108 together coordinate a divalent metal cation. His108 serves as the catalytic Proton donor. Residue 110–112 (NVR) participates in substrate binding. The a divalent metal cation site is built by His147 and His177. The segment at 242–277 (YVEFNLVYDRGTLFGLQTGGRTESILMSMPPLVRWE) is important for dimerization. 260 to 262 (GGR) contacts substrate.

It belongs to the aerobic coproporphyrinogen-III oxidase family. As to quaternary structure, homodimer. The cofactor is a divalent metal cation.

It localises to the cytoplasm. It catalyses the reaction coproporphyrinogen III + O2 + 2 H(+) = protoporphyrinogen IX + 2 CO2 + 2 H2O. It participates in porphyrin-containing compound metabolism; protoporphyrin-IX biosynthesis; protoporphyrinogen-IX from coproporphyrinogen-III (O2 route): step 1/1. Its function is as follows. Involved in the heme biosynthesis. Catalyzes the aerobic oxidative decarboxylation of propionate groups of rings A and B of coproporphyrinogen-III to yield the vinyl groups in protoporphyrinogen-IX. This Shewanella halifaxensis (strain HAW-EB4) protein is Oxygen-dependent coproporphyrinogen-III oxidase.